Reading from the N-terminus, the 846-residue chain is MAEITVGQLAQQTNKEVDALLKQLKSFGIEKSSEKDTLTPTEMKTLLEKINSAKNTATRKKVTSVKLDGKHKINVSVKRKRRVAKKMEQQESTTLEQPQELETMVQEVSQQVDIVKEQDNIEQIVENKEAVKVQEQRQAEIAKPVIKDSGFKITAMPEIKIEEIVAEDDEGLAASDKQAKKKAAKKVFSEAVNTNTKYKREEEEKKSKAKKAGGKGFKKANPRQLSQLAGDLESFDEFGAKKGKLKAPKVKKQEFTKPVENTVRTVEIYEGITVSELAQKMAVKGAEIVKVLFNMGVMATINQSLDQDTAILIVEEMGHKYTLHNENALEEAVTIVDRSSYKKISRAPVVTIMGHVDHGKTSLLDYIRQTRVVAGEAGGITQHIGAYSVKTDKGSITFLDTPGHEAFTSMRARGAKSTDIVILVVAADDGVMPQTEEAIQHAKAARVPIVVAVNKIDKPEADSDKVISELAQRNVIPESWGGDVMFVNVSAKTGEGVADLLEAVLLQSEVLELEAFAEGLAEGVVIESRLEKGRGPVATVLVQNGNLKQGDNILCGTEYGRVRAMHNDLGKKIKAAGPATPVEILGLSGVPAAGDEMVVIENEKKAKELAAQRSQKQKEAKIAQEQSLKLSNMFNNMGKEGEQQVLKIILKGDVQGSVEAIRESLLKLSTDEVKVDIIASGIGAITSSDVTLAVASTAVVIGFNVRADSAAKKLAETDGVEFRYYNIIYDLIDDVKKAMSGLLSPEMKEQIIGIAEVREVYRSSKFGSIAGCMVIEGVVKRTNPIRVLRNNVVIYEGTLESLKRFKDDASEVKKGLECGIGVKNYNDVREGDQIEVFEVIEVAKEL.

The segment at 199–219 (KREEEEKKSKAKKAGGKGFKK) is disordered. Residues 207–219 (SKAKKAGGKGFKK) are compositionally biased toward basic residues. The tr-type G domain maps to 345–512 (SRAPVVTIMG…AVLLQSEVLE (168 aa)). A G1 region spans residues 354 to 361 (GHVDHGKT). 354–361 (GHVDHGKT) serves as a coordination point for GTP. Residues 379 to 383 (GITQH) are G2. Positions 400–403 (DTPG) are G3. Residues 400 to 404 (DTPGH) and 454 to 457 (NKID) each bind GTP. The G4 stretch occupies residues 454-457 (NKID). Residues 490–492 (SAK) form a G5 region.

The protein belongs to the TRAFAC class translation factor GTPase superfamily. Classic translation factor GTPase family. IF-2 subfamily.

The protein resides in the cytoplasm. In terms of biological role, one of the essential components for the initiation of protein synthesis. Protects formylmethionyl-tRNA from spontaneous hydrolysis and promotes its binding to the 30S ribosomal subunits. Also involved in the hydrolysis of GTP during the formation of the 70S ribosomal complex. The protein is Translation initiation factor IF-2 of Francisella tularensis subsp. holarctica (strain LVS).